A 437-amino-acid chain; its full sequence is Elongation factor Tu, mitochondrial (437 aa).

A mitochondrion-targeting transit peptide spans 1–38 (MSALLPRLLTRTAFKASGKLLRLSSVISRTFSQTTTSY). The tr-type G domain maps to 46 to 242 (KPHVNIGTIG…AVDEYIPTPE (197 aa)). Residues 55–62 (GHVDHGKT) are G1. 55-62 (GHVDHGKT) is a GTP binding site. The G2 stretch occupies residues 96 to 100 (GITIS). The segment at 117–120 (DCPG) is G3. GTP-binding positions include 117–121 (DCPGH) and 172–175 (NKVD). The tract at residues 172–175 (NKVD) is G4. Residues 210-212 (SAL) are G5.

It belongs to the TRAFAC class translation factor GTPase superfamily. Classic translation factor GTPase family. EF-Tu/EF-1A subfamily. The precursor is processed in two steps involving mitochondrial intermediate peptidase (MIP) and mitochondrial processing peptidase (MPP).

It localises to the mitochondrion. It functions in the pathway protein biosynthesis; polypeptide chain elongation. Functionally, G-protein that, in its active GTP-bound form, binds to and delivers aminoacyl-tRNA to the A-site of ribosomes during protein biosynthesis. In the presence of a correct codon-anticodon match between the aminoacyl-tRNA and the A-site codon of the ribosome-bound mRNA, the ribosome acts as a GTPase activator and the GTP is hydrolyzed. The inactive GDP-bound form leaves the ribosome and must be recycled before binding another molecule of aminoacyl-tRNA. Required for mitochondrial protein biosynthesis and maintenance of mitochondrial DNA. The chain is Elongation factor Tu, mitochondrial (TUF1) from Saccharomyces cerevisiae (strain ATCC 204508 / S288c) (Baker's yeast).